A 440-amino-acid chain; its full sequence is Cell division protein FtsA (440 aa).

Belongs to the FtsA/MreB family. As to quaternary structure, self-interacts. Interacts with FtsZ.

It is found in the cell membrane. Functionally, cell division protein that is involved in the assembly of the Z ring. May serve as a membrane anchor for the Z ring. The protein is Cell division protein FtsA of Enterococcus faecalis (strain ATCC 700802 / V583).